The chain runs to 372 residues: N-methyl-L-tryptophan oxidase (372 aa).

4–34 (DLIIIGSGSVGAAAGYYATRAGLNVLMTDAH) contributes to the FAD binding site. Cysteine 308 is modified (S-8alpha-FAD cysteine).

The protein belongs to the MSOX/MTOX family. MTOX subfamily. As to quaternary structure, monomer. FAD is required as a cofactor.

The enzyme catalyses N(alpha)-methyl-L-tryptophan + O2 + H2O = L-tryptophan + formaldehyde + H2O2. Functionally, catalyzes the oxidative demethylation of N-methyl-L-tryptophan. In Shigella sonnei (strain Ss046), this protein is N-methyl-L-tryptophan oxidase.